We begin with the raw amino-acid sequence, 396 residues long: Enoyl-[acyl-carrier-protein] reductase [NADH] (396 aa).

NAD(+)-binding positions include 47 to 52, 73 to 74, 110 to 111, and 138 to 139; these read GASTGF, FE, DA, and LA. Y224 contacts substrate. Residue Y234 is the Proton donor of the active site. NAD(+) is bound by residues K243 and 272–274; that span reads LVT.

Belongs to the TER reductase family. As to quaternary structure, monomer.

It catalyses the reaction a 2,3-saturated acyl-[ACP] + NAD(+) = a (2E)-enoyl-[ACP] + NADH + H(+). Its pathway is lipid metabolism; fatty acid biosynthesis. Involved in the final reduction of the elongation cycle of fatty acid synthesis (FAS II). Catalyzes the reduction of a carbon-carbon double bond in an enoyl moiety that is covalently linked to an acyl carrier protein (ACP). This is Enoyl-[acyl-carrier-protein] reductase [NADH] from Cytophaga hutchinsonii (strain ATCC 33406 / DSM 1761 / CIP 103989 / NBRC 15051 / NCIMB 9469 / D465).